The sequence spans 340 residues: MSEKNAYAKSGVDVEAGYEVVERIKKHVARTERAGVMGALGGFGGMFDLSKTGVREPVLVSGTDGVGTKLMLAIKYDKHDTIGQDCVAMCVNDIIAAGAEPLYFLDYVATGKNNPVKFEEVVSGVAEGCVQAGAALIGGETAEMPGMYGEDDYDLAGFAVGVAEKSQLIDGSKVKEGDILLGLASSGIHSNGYSLVRRVFADYTGKELLPELEGKQLKDVLLEPTRIYVRAALPLIKEELVNGIGHITGGGFIENVPRMFADDLAAEIDEDKVPVLPIFKALEKYGDIKHEEMFEIFNMGVGLMLAVSPENVNRVKELLDEPVYEIGRIIKKADDSVVIK.

The protein belongs to the AIR synthase family.

The protein localises to the cytoplasm. It catalyses the reaction 2-formamido-N(1)-(5-O-phospho-beta-D-ribosyl)acetamidine + ATP = 5-amino-1-(5-phospho-beta-D-ribosyl)imidazole + ADP + phosphate + H(+). It functions in the pathway purine metabolism; IMP biosynthesis via de novo pathway; 5-amino-1-(5-phospho-D-ribosyl)imidazole from N(2)-formyl-N(1)-(5-phospho-D-ribosyl)glycinamide: step 2/2. This Streptococcus pyogenes serotype M12 (strain MGAS2096) protein is Phosphoribosylformylglycinamidine cyclo-ligase.